Reading from the N-terminus, the 138-residue chain is Ribulose bisphosphate carboxylase small subunit (138 aa).

It belongs to the RuBisCO small chain family. In terms of assembly, heterohexadecamer of 8 large and 8 small subunits.

Its subcellular location is the plastid. It localises to the chloroplast. RuBisCO catalyzes two reactions: the carboxylation of D-ribulose 1,5-bisphosphate, the primary event in carbon dioxide fixation, as well as the oxidative fragmentation of the pentose substrate in the photorespiration process. Both reactions occur simultaneously and in competition at the same active site. Although the small subunit is not catalytic it is essential for maximal activity. This Pyropia katadae (Red alga) protein is Ribulose bisphosphate carboxylase small subunit.